The chain runs to 401 residues: Nodal homolog 3-B (401 aa).

Residues 1–18 (MALLNLFFCLVFSSPLMA) form the signal peptide. Residues 19-274 (MPPVLQGRKS…KVNGFRRLRR (256 aa)) constitute a propeptide that is removed on maturation. Residues N168, N337, N341, and N344 are each glycosylated (N-linked (GlcNAc...) asparagine). 2 cysteine pairs are disulfide-bonded: C299–C365 and C328–C396.

The protein belongs to the TGF-beta family. As to quaternary structure, monomer. The propeptide region interacts with bmp4 in a non-covalent manner. In terms of tissue distribution, expressed in the dorsal marginal region of late blastula, becoming restricted to the dorsal blastopore lip (Spemann organizer) at the early gastrula stage.

It localises to the secreted. Its function is as follows. Exhibits mesoderm-dorsalizing activity and neural-inducing activity, but lacks mesoderm-inducing activity. Regulates the expression of specific mesodermal and neural genes. Induces convergent extension movements at the embryonic midline by activating the fgf signaling pathway to induce t/bra expression in the organizer region. Acts with wnt11 to induce Spemann organizer cells and induce axis formation. The unprocessed protein antagonizes bmp-signaling. In Xenopus laevis (African clawed frog), this protein is Nodal homolog 3-B (nodal3-b).